We begin with the raw amino-acid sequence, 311 residues long: Large ribosomal subunit protein uL22 (311 aa).

Belongs to the universal ribosomal protein uL22 family. As to quaternary structure, part of the 50S ribosomal subunit.

Functionally, this protein binds specifically to 23S rRNA; its binding is stimulated by other ribosomal proteins, e.g. L4, L17, and L20. It is important during the early stages of 50S assembly. It makes multiple contacts with different domains of the 23S rRNA in the assembled 50S subunit and ribosome. In terms of biological role, the globular domain of the protein is located near the polypeptide exit tunnel on the outside of the subunit, while an extended beta-hairpin is found that lines the wall of the exit tunnel in the center of the 70S ribosome. In Ureaplasma parvum serovar 3 (strain ATCC 27815 / 27 / NCTC 11736), this protein is Large ribosomal subunit protein uL22 (rplV).